We begin with the raw amino-acid sequence, 272 residues long: Tryptophan synthase alpha chain (272 aa).

Catalysis depends on proton acceptor residues glutamate 49 and aspartate 60.

This sequence belongs to the TrpA family. As to quaternary structure, tetramer of two alpha and two beta chains.

The catalysed reaction is (1S,2R)-1-C-(indol-3-yl)glycerol 3-phosphate + L-serine = D-glyceraldehyde 3-phosphate + L-tryptophan + H2O. The protein operates within amino-acid biosynthesis; L-tryptophan biosynthesis; L-tryptophan from chorismate: step 5/5. The alpha subunit is responsible for the aldol cleavage of indoleglycerol phosphate to indole and glyceraldehyde 3-phosphate. In Polaromonas naphthalenivorans (strain CJ2), this protein is Tryptophan synthase alpha chain.